A 331-amino-acid chain; its full sequence is MENLEGIVDRAKDAVAKAESEQSLEQLRVDYLGKKGRITQLLKELGRLDAAERPAAGAKINEAKLLVQDLINEAKSELSSKNEAAKLAAESIDVTLPGRKESLGTLHPVTRTMLRIEDFFARSGYTVEEGPEIQDDYHNFEALNIPSHHPARAMHDTFYFDPKTLLRTHTSPVQIRVMESSKPPFRMICPGRVYRCDSDMTHTPMFHQVEGLMVDKHVSFADLKSTIVEFLREFFEKDLEVRFRPSYFPFTEPSAEVDIEWGRNEDGSIKWLEVMGCGMVHPKVFEAAGVDSETYSGFAFGMGVERLAMLRYGVNDLRMFFENDMRFLDQF.

Glu-252 provides a ligand contact to Mg(2+).

Belongs to the class-II aminoacyl-tRNA synthetase family. Phe-tRNA synthetase alpha subunit type 1 subfamily. As to quaternary structure, tetramer of two alpha and two beta subunits. Mg(2+) is required as a cofactor.

The protein resides in the cytoplasm. The enzyme catalyses tRNA(Phe) + L-phenylalanine + ATP = L-phenylalanyl-tRNA(Phe) + AMP + diphosphate + H(+). This chain is Phenylalanine--tRNA ligase alpha subunit, found in Hahella chejuensis (strain KCTC 2396).